Consider the following 298-residue polypeptide: Glutamate/glycine mitochondrial carrier ymc1 (298 aa).

Solcar repeat units lie at residues 14–98, 106–193, and 206–294; these read TKDF…CKRF, VTMP…LVKN, and TPGW…VSQH. Helical transmembrane passes span 17-37, 67-87, 112-132, 172-192, 212-232, and 266-287; these read FLAGVSGGVAQVLVGQPFDCV, LAAFYKGTVLPLLGIGFCVSI, YVSGAISGLANSFLVGPVEHV, TAAREAHGLGMYFLAYEALVK, CVFGAGAGYAMWLAAYPFDIV, and FYRGFVPVLVRAAPANAVTFYV.

It belongs to the mitochondrial carrier (TC 2.A.29) family.

It localises to the mitochondrion inner membrane. In terms of biological role, acts as a glutamate and glycine mitochondrial transmembrane transporter. The chain is Glutamate/glycine mitochondrial carrier ymc1 (ymc1) from Schizosaccharomyces pombe (strain 972 / ATCC 24843) (Fission yeast).